Reading from the N-terminus, the 334-residue chain is Malate dehydrogenase, mitochondrial (334 aa).

The transit peptide at 1 to 17 directs the protein to the mitochondrion; the sequence is MLSRVAKRAFSSTVANP. NAD(+)-binding positions include 24–30 and Asp50; that span reads GAGGGIG. Substrate is bound by residues Arg99 and Arg105. NAD(+)-binding positions include Asn112 and 135 to 137; that span reads ISN. Residues Asn137 and Arg171 each coordinate substrate. Ser177 carries the post-translational modification Phosphoserine. Catalysis depends on His195, which acts as the Proton acceptor. Thr199 carries the post-translational modification Phosphothreonine. An NAD(+)-binding site is contributed by Met245.

It belongs to the LDH/MDH superfamily. MDH type 1 family. Homodimer.

The protein resides in the mitochondrion matrix. The catalysed reaction is (S)-malate + NAD(+) = oxaloacetate + NADH + H(+). This chain is Malate dehydrogenase, mitochondrial (MDH1), found in Saccharomyces cerevisiae (strain ATCC 204508 / S288c) (Baker's yeast).